The following is a 475-amino-acid chain: tRNA-2-methylthio-N(6)-dimethylallyladenosine synthase (475 aa).

The region spanning 2-119 is the MTTase N-terminal domain; that stretch reads AKLHITTWGC…LPEMINKIRG (118 aa). [4Fe-4S] cluster-binding residues include Cys11, Cys48, Cys82, Cys156, Cys160, and Cys163. Residues 142-374 form the Radical SAM core domain; the sequence is RAEGPTAFVS…QQRINHQAMQ (233 aa). A TRAM domain is found at 377-440; the sequence is RAMLGTEQRV…TNSLRGEVVR (64 aa).

It belongs to the methylthiotransferase family. MiaB subfamily. In terms of assembly, monomer. The cofactor is [4Fe-4S] cluster.

Its subcellular location is the cytoplasm. It catalyses the reaction N(6)-dimethylallyladenosine(37) in tRNA + (sulfur carrier)-SH + AH2 + 2 S-adenosyl-L-methionine = 2-methylsulfanyl-N(6)-dimethylallyladenosine(37) in tRNA + (sulfur carrier)-H + 5'-deoxyadenosine + L-methionine + A + S-adenosyl-L-homocysteine + 2 H(+). In terms of biological role, catalyzes the methylthiolation of N6-(dimethylallyl)adenosine (i(6)A), leading to the formation of 2-methylthio-N6-(dimethylallyl)adenosine (ms(2)i(6)A) at position 37 in tRNAs that read codons beginning with uridine. This chain is tRNA-2-methylthio-N(6)-dimethylallyladenosine synthase, found in Actinobacillus pleuropneumoniae serotype 3 (strain JL03).